A 55-amino-acid polypeptide reads, in one-letter code: Putative virulence-regulating protein PA2146 (55 aa).

The disordered stretch occupies residues 1–55; it reads MAQHQGGKGNFAEDPKRASEAGKKGGQASGGNFKNDPQRASEAGKKGGQRSHGGN. Basic and acidic residues-rich tracts occupy residues 11–23 and 36–45; these read FAED…EAGK and DPQRASEAGK.

The protein belongs to the con-10 family.

Functionally, may be involved in the regulation of the production of pyocyanine, one of the major virulence factors secreted by P.aeruginosa, and other virulence factors. The sequence is that of Putative virulence-regulating protein PA2146 from Pseudomonas aeruginosa (strain ATCC 15692 / DSM 22644 / CIP 104116 / JCM 14847 / LMG 12228 / 1C / PRS 101 / PAO1).